Here is a 707-residue protein sequence, read N- to C-terminus: Bone morphogenetic protein 1 (707 aa).

Residues 57 to 90 (SGAATNISRPEKGRRTRKERRRSREKRASTSRPE) form a disordered region. Asn-62 is a glycosylation site (N-linked (GlcNAc...) asparagine). Basic residues predominate over residues 68–81 (KGRRTRKERRRSRE). Positions 84–283 (ASTSRPERVW…AQARKLYKCP (200 aa)) constitute a Peptidase M12A domain. Residue Asn-105 is glycosylated (N-linked (GlcNAc...) asparagine). Intrachain disulfides connect Cys-126-Cys-282, Cys-146-Cys-168, Cys-148-Cys-149, and Cys-285-Cys-311. His-176 is a Zn(2+) binding site. Residue Glu-177 is part of the active site. Zn(2+) is bound by residues His-180 and His-186. 2 consecutive CUB domains span residues 285 to 397 (CGET…YEAL) and 398 to 509 (CGGE…NYFK). N-linked (GlcNAc...) asparagine glycans are attached at residues Asn-295 and Asn-326. 8 disulfide bridges follow: Cys-338-Cys-360, Cys-398-Cys-424, Cys-451-Cys-473, Cys-514-Cys-526, Cys-522-Cys-535, Cys-537-Cys-550, Cys-554-Cys-580, and Cys-607-Cys-629. Residues 510–551 (EVDECSRPNNGGCEQRCVNTLGSYKCACDPGYELGQDKKSCE) enclose the EGF-like; calcium-binding domain. Residues 554–666 (CGGFLTKLNG…KGFQANFFSE (113 aa)) enclose the CUB 3 domain. Asn-562 carries an N-linked (GlcNAc...) asparagine glycan. The disordered stretch occupies residues 682 to 707 (RGQQNQAPKRVRPRMRLRTVKKTRPP). The span at 690–707 (KRVRPRMRLRTVKKTRPP) shows a compositional bias: basic residues.

In terms of assembly, interacts with olfml3/ont1. Requires Zn(2+) as cofactor. In terms of processing, proteolytically activated in the trans-Golgi network by furin-like/paired basic proprotein convertases, cleavage is not required for secretion.

It localises to the golgi apparatus. The protein resides in the trans-Golgi network. It is found in the secreted. The protein localises to the extracellular space. Its subcellular location is the extracellular matrix. Its function is as follows. Metalloprotease involved in pattern formation in gastrula and later differentiation of developing organs. Able to cleave chordin (chrd), suggesting that it may act in dorsoventral patterning during early development by regulating the chordin (chrd) activity. In Xenopus laevis (African clawed frog), this protein is Bone morphogenetic protein 1 (bmp1).